A 527-amino-acid chain; its full sequence is Bifunctional purine biosynthesis protein PurH (527 aa).

Residues 1 to 149 enclose the MGS-like domain; it reads MTADLLPVRR…KNFARVAVAT (149 aa).

This sequence belongs to the PurH family.

It catalyses the reaction (6R)-10-formyltetrahydrofolate + 5-amino-1-(5-phospho-beta-D-ribosyl)imidazole-4-carboxamide = 5-formamido-1-(5-phospho-D-ribosyl)imidazole-4-carboxamide + (6S)-5,6,7,8-tetrahydrofolate. The catalysed reaction is IMP + H2O = 5-formamido-1-(5-phospho-D-ribosyl)imidazole-4-carboxamide. It participates in purine metabolism; IMP biosynthesis via de novo pathway; 5-formamido-1-(5-phospho-D-ribosyl)imidazole-4-carboxamide from 5-amino-1-(5-phospho-D-ribosyl)imidazole-4-carboxamide (10-formyl THF route): step 1/1. Its pathway is purine metabolism; IMP biosynthesis via de novo pathway; IMP from 5-formamido-1-(5-phospho-D-ribosyl)imidazole-4-carboxamide: step 1/1. The chain is Bifunctional purine biosynthesis protein PurH from Stenotrophomonas maltophilia (strain K279a).